Reading from the N-terminus, the 390-residue chain is Chorismate synthase 1 (390 aa).

Positions 39 and 45 each coordinate NADP(+). Positions 95 to 117 (EQEEKEMKRKVTKPRPGHADLNG) are disordered. FMN-binding positions include 132–134 (RSS), 253–254 (NA), glycine 298, 313–317 (KPIPT), and arginine 339.

The protein belongs to the chorismate synthase family. In terms of assembly, homotetramer. Requires FMNH2 as cofactor.

The catalysed reaction is 5-O-(1-carboxyvinyl)-3-phosphoshikimate = chorismate + phosphate. Its pathway is metabolic intermediate biosynthesis; chorismate biosynthesis; chorismate from D-erythrose 4-phosphate and phosphoenolpyruvate: step 7/7. Its function is as follows. Catalyzes the anti-1,4-elimination of the C-3 phosphate and the C-6 proR hydrogen from 5-enolpyruvylshikimate-3-phosphate (EPSP) to yield chorismate, which is the branch point compound that serves as the starting substrate for the three terminal pathways of aromatic amino acid biosynthesis. This reaction introduces a second double bond into the aromatic ring system. This Bacillus thuringiensis (strain Al Hakam) protein is Chorismate synthase 1.